The sequence spans 256 residues: Omega-amidase YafV (256 aa).

The CN hydrolase domain occupies 4–234 (LKLTLLQQPL…AAQLDAELSL (231 aa)). Catalysis depends on Glu42, which acts as the Proton acceptor. The active site involves Lys107. Catalysis depends on Cys141, which acts as the Nucleophile.

This sequence belongs to the carbon-nitrogen hydrolase superfamily. NIT1/NIT2 family.

It carries out the reaction a monoamide of a dicarboxylate + H2O = a dicarboxylate + NH4(+). Hydrolyzes alpha-ketoglutaramate (a-KGM) to alpha-ketoglutarate (alpha-KG) and ammonia (specific activity 21 umol/min/mg), has very weak activity on L-glutamine, and no activity on deaminated glutathione (dGSH) or glutathione. May function as a metabolite repair enzyme. The polypeptide is Omega-amidase YafV (Yersinia enterocolitica).